The sequence spans 245 residues: 1-(5-phosphoribosyl)-5-[(5-phosphoribosylamino)methylideneamino] imidazole-4-carboxamide isomerase (245 aa).

The Proton acceptor role is filled by aspartate 8. The Proton donor role is filled by aspartate 129.

The protein belongs to the HisA/HisF family.

The protein localises to the cytoplasm. It carries out the reaction 1-(5-phospho-beta-D-ribosyl)-5-[(5-phospho-beta-D-ribosylamino)methylideneamino]imidazole-4-carboxamide = 5-[(5-phospho-1-deoxy-D-ribulos-1-ylimino)methylamino]-1-(5-phospho-beta-D-ribosyl)imidazole-4-carboxamide. The protein operates within amino-acid biosynthesis; L-histidine biosynthesis; L-histidine from 5-phospho-alpha-D-ribose 1-diphosphate: step 4/9. This is 1-(5-phosphoribosyl)-5-[(5-phosphoribosylamino)methylideneamino] imidazole-4-carboxamide isomerase from Sinorhizobium fredii (strain NBRC 101917 / NGR234).